Here is a 57-residue protein sequence, read N- to C-terminus: Insulin (57 aa).

Cystine bridges form between cysteine 12-cysteine 43, cysteine 24-cysteine 56, and cysteine 42-cysteine 47.

It belongs to the insulin family. In terms of assembly, heterodimer of a B chain and an A chain linked by two disulfide bonds.

It localises to the secreted. Functionally, insulin decreases blood glucose concentration. It increases cell permeability to monosaccharides, amino acids and fatty acids. It accelerates glycolysis, the pentose phosphate cycle, and glycogen synthesis in liver. The protein is Insulin (ins) of Lampetra fluviatilis (European river lamprey).